The sequence spans 166 residues: Nucleotide-binding protein CV_2047 (166 aa).

This sequence belongs to the YajQ family.

Functionally, nucleotide-binding protein. This chain is Nucleotide-binding protein CV_2047, found in Chromobacterium violaceum (strain ATCC 12472 / DSM 30191 / JCM 1249 / CCUG 213 / NBRC 12614 / NCIMB 9131 / NCTC 9757 / MK).